Consider the following 292-residue polypeptide: Undecaprenyl-diphosphatase (292 aa).

A run of 7 helical transmembrane segments spans residues Met1–Val21, Phe46–Ile66, Leu90–His110, Ala114–Ala134, Phe192–Pro212, Val225–Trp245, and Val253–Val273.

It belongs to the UppP family.

It is found in the cell inner membrane. It catalyses the reaction di-trans,octa-cis-undecaprenyl diphosphate + H2O = di-trans,octa-cis-undecaprenyl phosphate + phosphate + H(+). Functionally, catalyzes the dephosphorylation of undecaprenyl diphosphate (UPP). Confers resistance to bacitracin. This Anaeromyxobacter sp. (strain K) protein is Undecaprenyl-diphosphatase.